A 1407-amino-acid chain; its full sequence is DNA-directed RNA polymerase subunit beta' (1407 aa).

Zn(2+)-binding residues include cysteine 70, cysteine 72, cysteine 85, and cysteine 88. Mg(2+) contacts are provided by aspartate 460, aspartate 462, and aspartate 464. Positions 814, 888, 895, and 898 each coordinate Zn(2+). Lysine 972 is subject to N6-acetyllysine.

Belongs to the RNA polymerase beta' chain family. The RNAP catalytic core consists of 2 alpha, 1 beta, 1 beta' and 1 omega subunit. When a sigma factor is associated with the core the holoenzyme is formed, which can initiate transcription. The cofactor is Mg(2+). Requires Zn(2+) as cofactor.

The enzyme catalyses RNA(n) + a ribonucleoside 5'-triphosphate = RNA(n+1) + diphosphate. Functionally, DNA-dependent RNA polymerase catalyzes the transcription of DNA into RNA using the four ribonucleoside triphosphates as substrates. The sequence is that of DNA-directed RNA polymerase subunit beta' from Shigella flexneri serotype 5b (strain 8401).